The sequence spans 339 residues: EEIG family member 2 (339 aa).

The C2 NT-type domain maps to 1–111; it reads MRLLDGGSFT…ILKVLISMQL (111 aa). The residue at position 197 (Ser197) is a Phosphoserine. Residues 226–262 are disordered; the sequence is TEPITAEPSPDPTAAAATATTTTAKEEEASEKLARCP. The span at 230-248 shows a compositional bias: low complexity; that stretch reads TAEPSPDPTAAAATATTTT. Over residues 249-259 the composition is skewed to basic and acidic residues; sequence AKEEEASEKLA. A phosphoserine mark is found at Ser255, Ser267, Ser299, Ser300, and Ser329.

Belongs to the EEIG family. Expressed in bone marrow-derived macrophages.

This is EEIG family member 2 (Eeig2) from Mus musculus (Mouse).